The following is a 401-amino-acid chain: Phosrestin-1 (401 aa).

It belongs to the arrestin family. As to expression, inner and outer segments, and the inner plexiform regions of the retina.

Undergoes light-induced phosphorylation, probably plays an important role in the photoreceptor transduction. The chain is Phosrestin-1 (Arr2) from Drosophila miranda (Fruit fly).